The chain runs to 325 residues: Ribosomal RNA small subunit methyltransferase H (325 aa).

Residues 42-44, aspartate 62, phenylalanine 86, aspartate 105, and glutamine 112 contribute to the S-adenosyl-L-methionine site; that span reads GGH.

It belongs to the methyltransferase superfamily. RsmH family.

The protein resides in the cytoplasm. It carries out the reaction cytidine(1402) in 16S rRNA + S-adenosyl-L-methionine = N(4)-methylcytidine(1402) in 16S rRNA + S-adenosyl-L-homocysteine + H(+). In terms of biological role, specifically methylates the N4 position of cytidine in position 1402 (C1402) of 16S rRNA. This is Ribosomal RNA small subunit methyltransferase H from Cupriavidus metallidurans (strain ATCC 43123 / DSM 2839 / NBRC 102507 / CH34) (Ralstonia metallidurans).